Consider the following 640-residue polypeptide: Endoglucanase 1 (640 aa).

A signal peptide spans 1–24 (MARRGGAAASSSMANLLGVALVLA). D94 acts as the Nucleophile in catalysis. Catalysis depends on residues H433, D485, and E494. N-linked (GlcNAc...) asparagine glycosylation is found at N528 and N548.

Belongs to the glycosyl hydrolase 9 (cellulase E) family. As to expression, expressed in roots, leaf sheaths and flowers.

The protein resides in the secreted. The enzyme catalyses Endohydrolysis of (1-&gt;4)-beta-D-glucosidic linkages in cellulose, lichenin and cereal beta-D-glucans.. This is Endoglucanase 1 (GLU7) from Oryza sativa subsp. japonica (Rice).